Reading from the N-terminus, the 448-residue chain is uncharacterized protein (448 aa).

Helical transmembrane passes span 14–34, 59–79, 87–107, 120–140, 148–168, 171–191, 250–270, 288–308, 316–333, 338–358, 392–412, and 417–437; these read PFII…YGII, TLLA…GFLA, VPML…TFGN, GLSA…VVGA, GGIF…GGIV, SLGY…DIAL, IFGP…FDAT, LMFG…GAMV, IGKR…LLCI, TSLN…VLAF, FSAY…VAGF, and FNFI…SLMA.

This sequence belongs to the major facilitator superfamily. TCR/Tet family.

The protein resides in the endoplasmic reticulum. It localises to the membrane. This is an uncharacterized protein from Schizosaccharomyces pombe (strain 972 / ATCC 24843) (Fission yeast).